Here is a 35-residue protein sequence, read N- to C-terminus: Photosystem II reaction center protein M (35 aa).

The helical transmembrane segment at 5–25 threads the bilayer; that stretch reads IFGLTATALFIIIPTSFLLIL.

It belongs to the PsbM family. In terms of assembly, PSII is composed of 1 copy each of membrane proteins PsbA, PsbB, PsbC, PsbD, PsbE, PsbF, PsbH, PsbI, PsbJ, PsbK, PsbL, PsbM, PsbT, PsbX, PsbY, PsbZ, Psb30/Ycf12, at least 3 peripheral proteins of the oxygen-evolving complex and a large number of cofactors. It forms dimeric complexes.

The protein localises to the plastid. Its subcellular location is the chloroplast thylakoid membrane. One of the components of the core complex of photosystem II (PSII). PSII is a light-driven water:plastoquinone oxidoreductase that uses light energy to abstract electrons from H(2)O, generating O(2) and a proton gradient subsequently used for ATP formation. It consists of a core antenna complex that captures photons, and an electron transfer chain that converts photonic excitation into a charge separation. This subunit is found at the monomer-monomer interface. This Tetradesmus obliquus (Green alga) protein is Photosystem II reaction center protein M.